We begin with the raw amino-acid sequence, 675 residues long: MSSQPRKILVTSALPYANGSIHLGHLLEHIQTDIWTRFQRMCGHEIYSVCADDAHGTPVMLKAQELGITPEEMVARTREEHHQDLLDFFVEYDNYHVTHSDENKELSELIYNRLNDAGYISKRTISQLFDPEKNMFLPDRFVKGTCPSCGAEDQNGDSCDNCGATYDPTEMKNPRSVVSGATPILKDSEHFFFDLPQFSDMLQNWLKSDALQSEISNKLEEWFEKGLQQWDISRDAPYFGFEIPGAPNKFFYVWVDAPVGYMASFKNLCDRSGINFDEYWGADSDAELYHFIGKDITYFHCLFWPAMLEGAGFRKPTGVNVHGFVTVNGAKMSKSKGTFIKGRTYLEHLNPEYLRYYFASKLGANVTDIDLNFEDFAQKVNSDLVGKVVNIASRCASFITKRFDGKLSDNVLEPALVAEFQHAQASIAQAFEERQYHKAIREIMALADKANQFIDANAPWVTIKDESKQAFTHDVCSLGINLFRLLMVYLKPVVPKLAEQAEAFLNDDLSWSSAQSVLTGHEINKFKALMQRVDMDKVNAMVDDSKENLAPTVTLDPNSPLAKDPISDTIEFDDFAKIDLRIAKIVVAEHVEKADKLLRLELDLGGETRQVFAGIKSAYQPEDLVGKLTVMVANLAPRKMRFGMSEGMVLAAGPGGKDLWIMEPHEGAQPGMKVK.

Positions 15 to 25 match the 'HIGH' region motif; sequence PYANGSIHLGH. Zn(2+)-binding residues include Cys146, Cys149, Cys159, and Cys162. Residues 331–335 carry the 'KMSKS' region motif; it reads KMSKS. Lys334 is an ATP binding site. Residues 574–675 form the tRNA-binding domain; the sequence is DFAKIDLRIA…EGAQPGMKVK (102 aa).

It belongs to the class-I aminoacyl-tRNA synthetase family. MetG type 1 subfamily. In terms of assembly, homodimer. The cofactor is Zn(2+).

It is found in the cytoplasm. It catalyses the reaction tRNA(Met) + L-methionine + ATP = L-methionyl-tRNA(Met) + AMP + diphosphate. Functionally, is required not only for elongation of protein synthesis but also for the initiation of all mRNA translation through initiator tRNA(fMet) aminoacylation. This Pseudoalteromonas atlantica (strain T6c / ATCC BAA-1087) protein is Methionine--tRNA ligase.